Here is a 154-residue protein sequence, read N- to C-terminus: Myoglobin (154 aa).

Residues 2 to 148 form the Globin domain; that stretch reads VLSDAEWHLV…FRKDIAAKYK (147 aa). Ser4 carries the phosphoserine modification. Position 65 (His65) interacts with nitrite. Position 65 (His65) interacts with O2. A Phosphothreonine modification is found at Thr68. His94 lines the heme b pocket.

It belongs to the globin family. In terms of assembly, monomeric.

The protein localises to the cytoplasm. It localises to the sarcoplasm. It carries out the reaction Fe(III)-heme b-[protein] + nitric oxide + H2O = Fe(II)-heme b-[protein] + nitrite + 2 H(+). The catalysed reaction is H2O2 + AH2 = A + 2 H2O. Monomeric heme protein which primary function is to store oxygen and facilitate its diffusion within muscle tissues. Reversibly binds oxygen through a pentacoordinated heme iron and enables its timely and efficient release as needed during periods of heightened demand. Depending on the oxidative conditions of tissues and cells, and in addition to its ability to bind oxygen, it also has a nitrite reductase activity whereby it regulates the production of bioactive nitric oxide. Under stress conditions, like hypoxia and anoxia, it also protects cells against reactive oxygen species thanks to its pseudoperoxidase activity. In Balaenoptera acutorostrata (Common minke whale), this protein is Myoglobin (MB).